The sequence spans 246 residues: tRNA (guanine-N(1)-)-methyltransferase (246 aa).

S-adenosyl-L-methionine is bound by residues G113 and 133-138 (IGDYVL).

The protein belongs to the RNA methyltransferase TrmD family. Homodimer.

Its subcellular location is the cytoplasm. It carries out the reaction guanosine(37) in tRNA + S-adenosyl-L-methionine = N(1)-methylguanosine(37) in tRNA + S-adenosyl-L-homocysteine + H(+). Its function is as follows. Specifically methylates guanosine-37 in various tRNAs. The protein is tRNA (guanine-N(1)-)-methyltransferase of Haemophilus influenzae (strain 86-028NP).